The chain runs to 445 residues: 3-dehydroquinate synthase, chloroplastic (445 aa).

The transit peptide at 1 to 68 (MAAFSLSAKQ…RASASSTAPV (68 aa)) directs the protein to the chloroplast. Residues asparagine 122, 153 to 155 (DGE), lysine 158, 186 to 191 (GGVIGD), 211 to 212 (TT), lysine 224, lysine 233, and 251 to 254 (TLNT) contribute to the NAD(+) site. Position 266 (glutamate 266) interacts with a divalent metal cation. Lysine 308 contacts NAD(+). A divalent metal cation is bound by residues histidine 329 and histidine 346.

The protein belongs to the sugar phosphate cyclases superfamily. Dehydroquinate synthase family. In terms of assembly, homodimer. The cofactor is a divalent metal cation. NAD(+) serves as cofactor.

It is found in the plastid. It localises to the chloroplast. The catalysed reaction is 7-phospho-2-dehydro-3-deoxy-D-arabino-heptonate = 3-dehydroquinate + phosphate. It functions in the pathway metabolic intermediate biosynthesis; chorismate biosynthesis; chorismate from D-erythrose 4-phosphate and phosphoenolpyruvate: step 2/7. In terms of biological role, catalyzes the second step in the shikimate pathway. The chain is 3-dehydroquinate synthase, chloroplastic (DHQS) from Actinidia chinensis var. chinensis (Chinese soft-hair kiwi).